The following is a 316-amino-acid chain: Cysteine synthase (316 aa).

Hydrogen sulfide is bound by residues asparagine 7 and arginine 35. Lysine 42 bears the N6-(pyridoxal phosphate)lysine mark. Pyridoxal 5'-phosphate is bound by residues asparagine 72 and glycine 177–serine 181. Leucine 268 provides a ligand contact to hydrogen sulfide. Residue serine 272 coordinates pyridoxal 5'-phosphate.

The protein belongs to the cysteine synthase/cystathionine beta-synthase family. As to quaternary structure, homodimer. It depends on pyridoxal 5'-phosphate as a cofactor.

The catalysed reaction is O-acetyl-L-serine + hydrogen sulfide = L-cysteine + acetate. It participates in amino-acid biosynthesis; L-cysteine biosynthesis; L-cysteine from L-serine: step 2/2. The sequence is that of Cysteine synthase (cysK) from Haemophilus influenzae (strain ATCC 51907 / DSM 11121 / KW20 / Rd).